The sequence spans 325 residues: Lipoyl synthase (325 aa).

Positions 72, 77, 83, 98, 102, 105, and 312 each coordinate [4Fe-4S] cluster. A Radical SAM core domain is found at 84-301 (FAGGTATFMI…AEEGERMGFK (218 aa)).

Belongs to the radical SAM superfamily. Lipoyl synthase family. Requires [4Fe-4S] cluster as cofactor.

The protein localises to the cytoplasm. The catalysed reaction is [[Fe-S] cluster scaffold protein carrying a second [4Fe-4S](2+) cluster] + N(6)-octanoyl-L-lysyl-[protein] + 2 oxidized [2Fe-2S]-[ferredoxin] + 2 S-adenosyl-L-methionine + 4 H(+) = [[Fe-S] cluster scaffold protein] + N(6)-[(R)-dihydrolipoyl]-L-lysyl-[protein] + 4 Fe(3+) + 2 hydrogen sulfide + 2 5'-deoxyadenosine + 2 L-methionine + 2 reduced [2Fe-2S]-[ferredoxin]. The protein operates within protein modification; protein lipoylation via endogenous pathway; protein N(6)-(lipoyl)lysine from octanoyl-[acyl-carrier-protein]: step 2/2. Catalyzes the radical-mediated insertion of two sulfur atoms into the C-6 and C-8 positions of the octanoyl moiety bound to the lipoyl domains of lipoate-dependent enzymes, thereby converting the octanoylated domains into lipoylated derivatives. In Azotobacter vinelandii (strain DJ / ATCC BAA-1303), this protein is Lipoyl synthase.